The sequence spans 163 residues: 6,7-dimethyl-8-ribityllumazine synthase (163 aa).

Residues phenylalanine 27, 58–60 (ALE), and 87–89 (CVV) each bind 5-amino-6-(D-ribitylamino)uracil. 92-93 (DT) provides a ligand contact to (2S)-2-hydroxy-3-oxobutyl phosphate. The active-site Proton donor is histidine 95. Asparagine 120 is a 5-amino-6-(D-ribitylamino)uracil binding site. Residue arginine 134 coordinates (2S)-2-hydroxy-3-oxobutyl phosphate.

The protein belongs to the DMRL synthase family.

The enzyme catalyses (2S)-2-hydroxy-3-oxobutyl phosphate + 5-amino-6-(D-ribitylamino)uracil = 6,7-dimethyl-8-(1-D-ribityl)lumazine + phosphate + 2 H2O + H(+). Its pathway is cofactor biosynthesis; riboflavin biosynthesis; riboflavin from 2-hydroxy-3-oxobutyl phosphate and 5-amino-6-(D-ribitylamino)uracil: step 1/2. Functionally, catalyzes the formation of 6,7-dimethyl-8-ribityllumazine by condensation of 5-amino-6-(D-ribitylamino)uracil with 3,4-dihydroxy-2-butanone 4-phosphate. This is the penultimate step in the biosynthesis of riboflavin. The sequence is that of 6,7-dimethyl-8-ribityllumazine synthase from Nitrobacter hamburgensis (strain DSM 10229 / NCIMB 13809 / X14).